The chain runs to 380 residues: Glycogenin-2 (380 aa).

3 residues coordinate UDP: leucine 10, tyrosine 16, and arginine 95. UDP-alpha-D-glucose-binding residues include leucine 10, tyrosine 16, arginine 95, lysine 104, aspartate 120, alanine 121, aspartate 122, asparagine 158, threonine 159, aspartate 185, aspartate 188, and glutamine 189. Aspartate 120, alanine 121, and aspartate 122 together coordinate UDP. Aspartate 120 is a Mn(2+) binding site. A Mn(2+)-binding site is contributed by aspartate 122. Residues tyrosine 230 and tyrosine 232 are each glycosylated (O-linked (Glc...) tyrosine). Residues histidine 249, glycine 252, and lysine 255 each coordinate UDP. Mn(2+) is bound at residue histidine 249. UDP-alpha-D-glucose-binding residues include glycine 252 and lysine 255. Residues 331-357 (SVDRNASQKSTAEKHDIEKPTSKPQSA) are disordered. The span at 341–351 (TAEKHDIEKPT) shows a compositional bias: basic and acidic residues. Tyrosine 367 is a glycosylation site (O-linked (Glc...) tyrosine).

It belongs to the glycosyltransferase 8 family. Glycogenin subfamily. In terms of assembly, interacts with glycogen synthase GSY2. It depends on Mn(2+) as a cofactor.

The protein resides in the cytoplasm. The protein localises to the vacuole. It carries out the reaction L-tyrosyl-[glycogenin] + UDP-alpha-D-glucose = alpha-D-glucosyl-L-tyrosyl-[glycogenin] + UDP + H(+). The catalysed reaction is [1,4-alpha-D-glucosyl](n)-L-tyrosyl-[glycogenin] + UDP-alpha-D-glucose = [1,4-alpha-D-glucosyl](n+1)-L-tyrosyl-[glycogenin] + UDP + H(+). Functionally, self-glucosylating initiator of glycogen synthesis. It catalyzes the formation of a short alpha (1,4)-glucosyl chain covalently attached via a glucose 1-O-tyrosyl linkage to internal tyrosine residues and these chains act as primers for the elongation reaction catalyzed by glycogen synthase. Capable of transferring glucosyl residues to unbound acceptors such as free oligoglucans or oligoglucan derivatives. This is Glycogenin-2 (GLG2) from Saccharomyces cerevisiae (strain YJM789) (Baker's yeast).